The sequence spans 375 residues: Trichodiene synthase (375 aa).

The protein belongs to the trichodiene synthase family.

The enzyme catalyses (2E,6E)-farnesyl diphosphate = trichodiene + diphosphate. The protein operates within sesquiterpene biosynthesis; trichothecene biosynthesis. Its function is as follows. TS is a member of the terpene cyclase group of enzymes. It catalyzes the isomerization and cyclization of farnesyl pyro-phosphate to form trichodiene, the first cyclic intermediate in the biosynthetic pathway for trichothecenes. It serves to branch trichothecene biosynthesis from the isoprenoid pathway. This chain is Trichodiene synthase (TRI5), found in Fusarium austroamericanum.